The primary structure comprises 210 residues: Large ribosomal subunit protein uL15 (210 aa).

Disordered stretches follow at residues M1–R64 and A76–T104. Residues E9–A54 show a composition bias toward low complexity. Residues A79–K93 show a composition bias toward basic and acidic residues.

The protein belongs to the universal ribosomal protein uL15 family. As to quaternary structure, part of the 50S ribosomal subunit.

In terms of biological role, binds to the 23S rRNA. The polypeptide is Large ribosomal subunit protein uL15 (Leifsonia xyli subsp. xyli (strain CTCB07)).